A 245-amino-acid polypeptide reads, in one-letter code: 3-deoxy-manno-octulosonate cytidylyltransferase (245 aa).

It belongs to the KdsB family.

It localises to the cytoplasm. It carries out the reaction 3-deoxy-alpha-D-manno-oct-2-ulosonate + CTP = CMP-3-deoxy-beta-D-manno-octulosonate + diphosphate. It participates in nucleotide-sugar biosynthesis; CMP-3-deoxy-D-manno-octulosonate biosynthesis; CMP-3-deoxy-D-manno-octulosonate from 3-deoxy-D-manno-octulosonate and CTP: step 1/1. It functions in the pathway bacterial outer membrane biogenesis; lipopolysaccharide biosynthesis. In terms of biological role, activates KDO (a required 8-carbon sugar) for incorporation into bacterial lipopolysaccharide in Gram-negative bacteria. The sequence is that of 3-deoxy-manno-octulosonate cytidylyltransferase from Elusimicrobium minutum (strain Pei191).